A 237-amino-acid polypeptide reads, in one-letter code: Phosphatidylserine decarboxylase proenzyme (237 aa).

Ser-206 acts as the Schiff-base intermediate with substrate; via pyruvic acid in catalysis. Ser-206 bears the Pyruvic acid (Ser); by autocatalysis mark.

The protein belongs to the phosphatidylserine decarboxylase family. PSD-A subfamily. Heterodimer of a large membrane-associated beta subunit and a small pyruvoyl-containing alpha subunit. Pyruvate serves as cofactor. In terms of processing, is synthesized initially as an inactive proenzyme. Formation of the active enzyme involves a self-maturation process in which the active site pyruvoyl group is generated from an internal serine residue via an autocatalytic post-translational modification. Two non-identical subunits are generated from the proenzyme in this reaction, and the pyruvate is formed at the N-terminus of the alpha chain, which is derived from the carboxyl end of the proenzyme. The post-translation cleavage follows an unusual pathway, termed non-hydrolytic serinolysis, in which the side chain hydroxyl group of the serine supplies its oxygen atom to form the C-terminus of the beta chain, while the remainder of the serine residue undergoes an oxidative deamination to produce ammonia and the pyruvoyl prosthetic group on the alpha chain.

The protein resides in the cell membrane. It catalyses the reaction a 1,2-diacyl-sn-glycero-3-phospho-L-serine + H(+) = a 1,2-diacyl-sn-glycero-3-phosphoethanolamine + CO2. It participates in phospholipid metabolism; phosphatidylethanolamine biosynthesis; phosphatidylethanolamine from CDP-diacylglycerol: step 2/2. In terms of biological role, catalyzes the formation of phosphatidylethanolamine (PtdEtn) from phosphatidylserine (PtdSer). The sequence is that of Phosphatidylserine decarboxylase proenzyme from Rhodococcus opacus (strain B4).